The chain runs to 151 residues: MGSDDLSAGDKIQKGFQINYMILRDADTGKVIWQENKDFSAPDVEHEARVPVKILDMRAVSREINFSTIEAMENFRLDQKVLFKGRIMEEWFFEMGFVGANTTNTWQSTIEAAPESQMMPAKVLNGNVTIQTSFYDNETLITKSVVRLYYI.

It belongs to the PDE6D/unc-119 family. As to quaternary structure, interacts with Pde6.

It is found in the nucleus. The protein resides in the cytoplasm. This chain is Probable cGMP 3',5'-cyclic phosphodiesterase subunit delta, found in Drosophila virilis (Fruit fly).